Here is a 253-residue protein sequence, read N- to C-terminus: Ubiquinone/menaquinone biosynthesis C-methyltransferase UbiE (253 aa).

S-adenosyl-L-methionine-binding positions include T76, D97, 125–126, and S142; that span reads NA.

This sequence belongs to the class I-like SAM-binding methyltransferase superfamily. MenG/UbiE family.

The catalysed reaction is a 2-demethylmenaquinol + S-adenosyl-L-methionine = a menaquinol + S-adenosyl-L-homocysteine + H(+). It catalyses the reaction a 2-methoxy-6-(all-trans-polyprenyl)benzene-1,4-diol + S-adenosyl-L-methionine = a 5-methoxy-2-methyl-3-(all-trans-polyprenyl)benzene-1,4-diol + S-adenosyl-L-homocysteine + H(+). Its pathway is quinol/quinone metabolism; menaquinone biosynthesis; menaquinol from 1,4-dihydroxy-2-naphthoate: step 2/2. The protein operates within cofactor biosynthesis; ubiquinone biosynthesis. Methyltransferase required for the conversion of demethylmenaquinol (DMKH2) to menaquinol (MKH2) and the conversion of 2-polyprenyl-6-methoxy-1,4-benzoquinol (DDMQH2) to 2-polyprenyl-3-methyl-6-methoxy-1,4-benzoquinol (DMQH2). This chain is Ubiquinone/menaquinone biosynthesis C-methyltransferase UbiE, found in Xanthomonas oryzae pv. oryzae (strain MAFF 311018).